Reading from the N-terminus, the 349-residue chain is GTP 3',8-cyclase (349 aa).

Residues 24 to 250 (PFGRAVTYLR…DIPYRTGGPA (227 aa)) form the Radical SAM core domain. Arginine 33 serves as a coordination point for GTP. 2 residues coordinate [4Fe-4S] cluster: cysteine 40 and cysteine 44. Tyrosine 46 serves as a coordination point for S-adenosyl-L-methionine. Cysteine 47 contributes to the [4Fe-4S] cluster binding site. A GTP-binding site is contributed by arginine 82. S-adenosyl-L-methionine is bound at residue glycine 86. Residue threonine 116 coordinates GTP. Serine 140 contacts S-adenosyl-L-methionine. Residue lysine 176 coordinates GTP. Methionine 210 contributes to the S-adenosyl-L-methionine binding site. Positions 273 and 276 each coordinate [4Fe-4S] cluster. Position 278–280 (278–280 (RVR)) interacts with GTP. Cysteine 290 lines the [4Fe-4S] cluster pocket.

Belongs to the radical SAM superfamily. MoaA family. In terms of assembly, monomer and homodimer. [4Fe-4S] cluster is required as a cofactor.

It carries out the reaction GTP + AH2 + S-adenosyl-L-methionine = (8S)-3',8-cyclo-7,8-dihydroguanosine 5'-triphosphate + 5'-deoxyadenosine + L-methionine + A + H(+). It functions in the pathway cofactor biosynthesis; molybdopterin biosynthesis. Catalyzes the cyclization of GTP to (8S)-3',8-cyclo-7,8-dihydroguanosine 5'-triphosphate. This is GTP 3',8-cyclase from Rhizobium meliloti (strain 1021) (Ensifer meliloti).